Reading from the N-terminus, the 133-residue chain is Probable non-specific lipid-transfer protein 2 (133 aa).

The N-terminal stretch at 1 to 31 (MRTVSMAALVVIAAALAWTSSAELASAPAPG) is a signal peptide. Cystine bridges form between cysteine 35–cysteine 83, cysteine 45–cysteine 60, cysteine 61–cysteine 106, and cysteine 81–cysteine 121.

The protein belongs to the plant LTP family.

Plant non-specific lipid-transfer proteins transfer phospholipids as well as galactolipids across membranes. May play a role in wax or cutin deposition in the cell walls of expanding epidermal cells and certain secretory tissues. The polypeptide is Probable non-specific lipid-transfer protein 2 (Parietaria judaica (Pellitory-of-the-wall)).